The primary structure comprises 327 residues: Probable cell division protein WhiA (327 aa).

The segment at residues 275 to 308 (SLEELGQLADPPMTKDAVAGRIRRLLSMADRKAK) is a DNA-binding region (H-T-H motif). The tract at residues 306–327 (KAKETGIPDTESAVTADLLDDA) is disordered.

The protein belongs to the WhiA family.

Functionally, involved in cell division and chromosome segregation. This chain is Probable cell division protein WhiA, found in Rhodococcus jostii (strain RHA1).